The sequence spans 194 residues: Holliday junction branch migration complex subunit RuvA (194 aa).

The interval 1–64 (MIGRLRGVLT…DDSAALYGFL (64 aa)) is domain I. The tract at residues 65 to 140 (SESERRLFRH…RAADFNNGIS (76 aa)) is domain II. Residues 140–144 (STSGK) form a flexible linker region. The segment at 145 to 194 (LNLDTVSEAALALQQLGYKPAEAARMARDAGTESDDVASVIKKALQAALR) is domain III.

It belongs to the RuvA family. Homotetramer. Forms an RuvA(8)-RuvB(12)-Holliday junction (HJ) complex. HJ DNA is sandwiched between 2 RuvA tetramers; dsDNA enters through RuvA and exits via RuvB. An RuvB hexamer assembles on each DNA strand where it exits the tetramer. Each RuvB hexamer is contacted by two RuvA subunits (via domain III) on 2 adjacent RuvB subunits; this complex drives branch migration. In the full resolvosome a probable DNA-RuvA(4)-RuvB(12)-RuvC(2) complex forms which resolves the HJ.

Its subcellular location is the cytoplasm. Functionally, the RuvA-RuvB-RuvC complex processes Holliday junction (HJ) DNA during genetic recombination and DNA repair, while the RuvA-RuvB complex plays an important role in the rescue of blocked DNA replication forks via replication fork reversal (RFR). RuvA specifically binds to HJ cruciform DNA, conferring on it an open structure. The RuvB hexamer acts as an ATP-dependent pump, pulling dsDNA into and through the RuvAB complex. HJ branch migration allows RuvC to scan DNA until it finds its consensus sequence, where it cleaves and resolves the cruciform DNA. The polypeptide is Holliday junction branch migration complex subunit RuvA (Xylella fastidiosa (strain 9a5c)).